A 502-amino-acid polypeptide reads, in one-letter code: Xyloglucan-specific endo-beta-1,4-glucanase BoGH5A (502 aa).

Positions 1–32 (MEKQSFSDGLFSPLGIKRVIFMLVLLTTSFIS) are cleaved as a signal peptide. Cys33 is lipidated: N-palmitoyl cysteine. A lipid anchor (S-diacylglycerol cysteine) is attached at Cys33. One can recognise a BACON domain in the interval 67 to 127 (GPAEWHISTS…PDIIINVKQS (61 aa)). Asn165, Val172, His251, and Asn296 together coordinate substrate. Glu297 serves as the catalytic Proton donor. Residue Glu430 is the Nucleophile of the active site. Trp472 provides a ligand contact to substrate.

This sequence belongs to the glycosyl hydrolase 5 (cellulase A) family.

Its subcellular location is the cell outer membrane. It carries out the reaction xyloglucan + H2O = xyloglucan oligosaccharides.. The protein operates within glucan metabolism; xyloglucan degradation. Catalyzes endohydrolysis of 1,4-beta-D-glucosidic linkages in xyloglucan with retention of the beta-configuration of the glycosyl residues in xyloglucan degradation. Cleaves the backbone of the 3 major types of natural xyloglucans (seed galactoxyloglucan from tamarind kernel, dicot fucogalactoxyloglucan from lettuce leaves, and solanaceous arabinogalactoxyloglucan from tomato fruit), to produce xyloglucan oligosaccharides. In Bacteroides ovatus (strain ATCC 8483 / DSM 1896 / JCM 5824 / BCRC 10623 / CCUG 4943 / NCTC 11153), this protein is Xyloglucan-specific endo-beta-1,4-glucanase BoGH5A.